The following is a 183-amino-acid chain: Protein CT_584 (183 aa).

It belongs to the chlamydial CPn_0803/CT_584/TC_0873 family.

The chain is Protein CT_584 from Chlamydia trachomatis serovar D (strain ATCC VR-885 / DSM 19411 / UW-3/Cx).